Here is a 241-residue protein sequence, read N- to C-terminus: uncharacterized protein (241 aa).

S-adenosyl-L-methionine-binding positions include 78 to 80 (TSA), glycine 111, isoleucine 131, and 138 to 140 (SSL).

Belongs to the class IV-like SAM-binding methyltransferase superfamily. RNA methyltransferase TrmH family.

This is an uncharacterized protein from Haemophilus influenzae (strain ATCC 51907 / DSM 11121 / KW20 / Rd).